Here is a 265-residue protein sequence, read N- to C-terminus: Interleukin-2 receptor subunit alpha (265 aa).

The signal sequence occupies residues 1 to 21; sequence MDSYLLMWGLLTLIMVPGCFA. The 63-residue stretch at 22-84 folds into the Sushi 1 domain; it reads ELCDDDPPEI…SWDNQCQCTS (63 aa). Residues 22–240 lie on the Extracellular side of the membrane; it reads ELCDDDPPEI…ETFIFTTEYQ (219 aa). Disulfide bonds link C24-C67, C49-C80, and C51-C82. N-linked (GlcNAc...) asparagine glycans are attached at residues N70 and N89. Residues 87–98 are compositionally biased toward polar residues; the sequence is TRNTTKQVTPQP. Residues 87 to 123 form a disordered region; it reads TRNTTKQVTPQPEEQKERKTTEMQSPMQPVDQASLPG. Residues 123–186 enclose the Sushi 2 domain; sequence GHCREPPPWE…WTQPQLICTG (64 aa). Intrachain disulfides connect C125/C168 and C152/C184. A disordered region spans residues 190 to 210; the sequence is TSQFPGEEKPQASPEGRPESE. Over residues 195–209 the composition is skewed to basic and acidic residues; the sequence is GEEKPQASPEGRPES. The chain crosses the membrane as a helical span at residues 241 to 259; that stretch reads VAVAGCVFLLISVLLLSGL. Topologically, residues 260 to 265 are cytoplasmic; that stretch reads TWQRRQ.

In terms of assembly, non-covalent dimer of an alpha and a beta subunit. IL2R exists in 3 different forms: a high affinity dimer, an intermediate affinity monomer (beta subunit), and a low affinity monomer (alpha subunit). The high and intermediate affinity forms also associate with a gamma subunit.

Its subcellular location is the membrane. In terms of biological role, receptor for interleukin-2. The receptor is involved in the regulation of immune tolerance by controlling regulatory T cells (TREGs) activity. TREGs suppress the activation and expansion of autoreactive T-cells. The sequence is that of Interleukin-2 receptor subunit alpha (IL2RA) from Pan troglodytes (Chimpanzee).